Consider the following 260-residue polypeptide: Cytosolic Fe-S cluster assembly factor Nubp2 homolog (260 aa).

Residue 14-21 (GKGGVGKS) coordinates ATP. The [4Fe-4S] cluster site is built by cysteine 188 and cysteine 191.

The protein belongs to the Mrp/NBP35 ATP-binding proteins family. NUBP2/CFD1 subfamily. Heterotetramer of 2 Nubp1 and 2 Nubp2 chains. [4Fe-4S] cluster serves as cofactor.

The protein resides in the cytoplasm. In terms of biological role, component of the cytosolic iron-sulfur (Fe/S) protein assembly (CIA) machinery. Required for maturation of extramitochondrial Fe-S proteins. The Nubp1-Nubp2 heterotetramer forms a Fe-S scaffold complex, mediating the de novo assembly of an Fe-S cluster and its transfer to target apoproteins. This Drosophila simulans (Fruit fly) protein is Cytosolic Fe-S cluster assembly factor Nubp2 homolog.